The chain runs to 371 residues: UDP-N-acetylglucosamine--N-acetylmuramyl-(pentapeptide) pyrophosphoryl-undecaprenol N-acetylglucosamine transferase (371 aa).

UDP-N-acetyl-alpha-D-glucosamine-binding positions include 10-12 (TGG), asparagine 124, arginine 165, serine 197, isoleucine 251, and glutamine 296.

Belongs to the glycosyltransferase 28 family. MurG subfamily.

Its subcellular location is the cell membrane. The enzyme catalyses di-trans,octa-cis-undecaprenyl diphospho-N-acetyl-alpha-D-muramoyl-L-alanyl-D-glutamyl-meso-2,6-diaminopimeloyl-D-alanyl-D-alanine + UDP-N-acetyl-alpha-D-glucosamine = di-trans,octa-cis-undecaprenyl diphospho-[N-acetyl-alpha-D-glucosaminyl-(1-&gt;4)]-N-acetyl-alpha-D-muramoyl-L-alanyl-D-glutamyl-meso-2,6-diaminopimeloyl-D-alanyl-D-alanine + UDP + H(+). It participates in cell wall biogenesis; peptidoglycan biosynthesis. Functionally, cell wall formation. Catalyzes the transfer of a GlcNAc subunit on undecaprenyl-pyrophosphoryl-MurNAc-pentapeptide (lipid intermediate I) to form undecaprenyl-pyrophosphoryl-MurNAc-(pentapeptide)GlcNAc (lipid intermediate II). This chain is UDP-N-acetylglucosamine--N-acetylmuramyl-(pentapeptide) pyrophosphoryl-undecaprenol N-acetylglucosamine transferase, found in Carboxydothermus hydrogenoformans (strain ATCC BAA-161 / DSM 6008 / Z-2901).